The chain runs to 202 residues: LexA repressor (202 aa).

Positions 28 to 48 (RAEIAQRLGFRSPNAAEEHLK) form a DNA-binding region, H-T-H motif. Active-site for autocatalytic cleavage activity residues include serine 119 and lysine 156.

This sequence belongs to the peptidase S24 family. As to quaternary structure, homodimer.

The enzyme catalyses Hydrolysis of Ala-|-Gly bond in repressor LexA.. Its function is as follows. Represses a number of genes involved in the response to DNA damage (SOS response), including recA and lexA. Binds to the 16 bp palindromic sequence 5'-CTGTATATATATACAG-3'. In the presence of single-stranded DNA, RecA interacts with LexA causing an autocatalytic cleavage which disrupts the DNA-binding part of LexA, leading to derepression of the SOS regulon and eventually DNA repair. The sequence is that of LexA repressor from Escherichia fergusonii (strain ATCC 35469 / DSM 13698 / CCUG 18766 / IAM 14443 / JCM 21226 / LMG 7866 / NBRC 102419 / NCTC 12128 / CDC 0568-73).